We begin with the raw amino-acid sequence, 173 residues long: Small ribosomal subunit protein uS5 (173 aa).

One can recognise an S5 DRBM domain in the interval L17 to V80.

The protein belongs to the universal ribosomal protein uS5 family. Part of the 30S ribosomal subunit. Contacts proteins S4 and S8.

Functionally, with S4 and S12 plays an important role in translational accuracy. Its function is as follows. Located at the back of the 30S subunit body where it stabilizes the conformation of the head with respect to the body. The polypeptide is Small ribosomal subunit protein uS5 (Delftia acidovorans (strain DSM 14801 / SPH-1)).